The chain runs to 85 residues: F(1)-ATPase inhibitor IF(1), mitochondrial (85 aa).

A mitochondrion-targeting transit peptide spans 1–22 (MLPRSALARSLQLQRGVAARFY). Residues 41–84 (KRERATEDFFVRQREKEQLRHLKEQLEKQRKKIDSLENKIDSMT) are a coiled coil.

Belongs to the ATPase inhibitor family. Monomer and homodimer. The protein aggregates less strongly with increasing pH.

Its subcellular location is the mitochondrion. Functionally, endogenous ATPase inhibitor, which inhibits specifically the reverse ATPase reaction of mitochondrial F(1)F(0)-type ATP synthase. It limits ATP depletion when the mitochondrial membrane potential falls below a threshold and the F(1)F(0)-ATP synthase starts hydrolyzing ATP to pump protons out of the mitochondrial matrix. Required to avoid the consumption of cellular ATP when the F(1)F(0)-ATP synthase enzyme acts as an ATP hydrolase. Functions through inserting its N-terminal part into the catalytically active F1-ATPase, thereby blocking its rotational movement and subsequently the ATP hydrolase activity. The polypeptide is F(1)-ATPase inhibitor IF(1), mitochondrial (INH1) (Saccharomyces cerevisiae (strain ATCC 204508 / S288c) (Baker's yeast)).